A 328-amino-acid polypeptide reads, in one-letter code: MITVVGGTFSKLHKGHKALLEKAIETGNEIVIGLTSDEYVKRNKVYPAIPYKERYRNLYNYMVKKTNKFRIRPIDDRNGNAPYERDYEIIVVSPETYQRSLKINEIRIQNGLPPLKIIRVPYVLAEDLFPISSTRIINGEIDGNGRRLKPVKVAIATNNSAKLKATNDFFHKLMKNFDVIQNTDYKLETQQPFGEVTMNMATKRAMQSLGDNDYAIGIESGIVYERFSRKYFDFHYCVVIDRFGNVTRGSSSGFEVPDRIIDLIKRDMSFSQAYGKVIDTNGIDDSTGIVGKISNGRVRRYDLIMECIRNAFIPRFDPDFYDTTYTPP.

The phosphopantetheine adenylyltransferase stretch occupies residues 1–152 (MITVVGGTFS…GNGRRLKPVK (152 aa)). Residues 153–328 (VAIATNNSAK…DFYDTTYTPP (176 aa)) are inosine/xanthosine triphosphatase.

This sequence in the N-terminal section; belongs to the eukaryotic CoaD family. It in the C-terminal section; belongs to the YjjX NTPase family. Mg(2+) is required as a cofactor. Mn(2+) serves as cofactor.

It localises to the cytoplasm. It carries out the reaction (R)-4'-phosphopantetheine + ATP + H(+) = 3'-dephospho-CoA + diphosphate. It catalyses the reaction XTP + H2O = XDP + phosphate + H(+). The catalysed reaction is ITP + H2O = IDP + phosphate + H(+). Its pathway is cofactor biosynthesis; coenzyme A biosynthesis. Reversibly transfers an adenylyl group from ATP to 4'-phosphopantetheine, yielding dephospho-CoA (dPCoA) and pyrophosphate. In terms of biological role, phosphatase that hydrolyzes non-canonical purine nucleotides such as XTP and ITP to their respective diphosphate derivatives. Probably excludes non-canonical purines from DNA/RNA precursor pool, thus preventing their incorporation into DNA/RNA and avoiding chromosomal lesions. This chain is Bifunctional phosphopantetheine adenylyltransferase/NTP phosphatase (coaD), found in Thermoplasma volcanium (strain ATCC 51530 / DSM 4299 / JCM 9571 / NBRC 15438 / GSS1).